A 935-amino-acid chain; its full sequence is Intimin (935 aa).

The first 41 residues, 1-41 (MITHGFYARTRHKHKLKKTFIMLSAGLGLFFYVNQNSFANG), serve as a signal peptide directing secretion. Positions 40-153 (NGENYFKLSS…KMTKMSPDAT (114 aa)) are peptidoglycan-binding. Residues 40–153 (NGENYFKLSS…KMTKMSPDAT (114 aa)) are sufficient for homodimerization. A required for periplasmic localization region spans residues 40 to 212 (NGENYFKLSS…LQAWLQHYGT (173 aa)). Residues 63 to 112 (LFYTLKTGETVSSISKSQGISLSVIWSLNKHLYSSESEMLKAAPGQQIIL) enclose the LysM domain. The segment at 210–411 (YGTAEVNLQS…LYSMQFRYQF (202 aa)) is inverse autotransporter. Positions 402-411 (LYSMQFRYQF) are signature sequence for beta-barrel assembly machinery (BAM), which recognizes the unfolded beta-barrel in the periplasm. Big-1 domains are found at residues 560–653 (VTDF…VIFV) and 660–754 (ITEI…VTFF). Residues 790-834 (GGNGTYSWHSENTNIATVDESGKVTLKGKGTAVINVTSGDKQTVS) form the BIG2 domain. Cysteine 859 and cysteine 933 are disulfide-bonded.

Belongs to the intimin/invasin family. As to quaternary structure, homodimer. Interacts with Tir.

The protein localises to the cell outer membrane. Functionally, an inverse autotransporter. Adhesin, which mediates attachment to the human intestine epithelial cells. Necessary for the production of attaching and effacing lesions on infected human tissue culture cells. Anchored to the outer membrane by binding to peptidoglycan (PGN) via its periplasmic domain, thus helping in receptor interactions during host invasion. PGN-binding may also aid in resisting mechanical and chemical stress during transit of the bacterium through the gastrointestinal tract of the host. The polypeptide is Intimin (eae) (Escherichia coli O111:H-).